Here is a 371-residue protein sequence, read N- to C-terminus: tRNA (guanine(26)-N(2))-dimethyltransferase (371 aa).

The Trm1 methyltransferase domain occupies 1–370 (MDVSEGGVTV…GGLAEVEAAV (370 aa)). Residues R36, R66, D81, D107, and A108 each contribute to the S-adenosyl-L-methionine site. Residues C238, C241, C258, and C261 each contribute to the Zn(2+) site.

This sequence belongs to the class I-like SAM-binding methyltransferase superfamily. Trm1 family.

It carries out the reaction guanosine(26) in tRNA + 2 S-adenosyl-L-methionine = N(2)-dimethylguanosine(26) in tRNA + 2 S-adenosyl-L-homocysteine + 2 H(+). Functionally, dimethylates a single guanine residue at position 26 of a number of tRNAs using S-adenosyl-L-methionine as donor of the methyl groups. This Halobacterium salinarum (strain ATCC 700922 / JCM 11081 / NRC-1) (Halobacterium halobium) protein is tRNA (guanine(26)-N(2))-dimethyltransferase.